A 445-amino-acid chain; its full sequence is Probable glycine dehydrogenase (decarboxylating) subunit 1 (445 aa).

Belongs to the GcvP family. N-terminal subunit subfamily. The glycine cleavage system is composed of four proteins: P, T, L and H. In this organism, the P 'protein' is a heterodimer of two subunits.

The catalysed reaction is N(6)-[(R)-lipoyl]-L-lysyl-[glycine-cleavage complex H protein] + glycine + H(+) = N(6)-[(R)-S(8)-aminomethyldihydrolipoyl]-L-lysyl-[glycine-cleavage complex H protein] + CO2. Its function is as follows. The glycine cleavage system catalyzes the degradation of glycine. The P protein binds the alpha-amino group of glycine through its pyridoxal phosphate cofactor; CO(2) is released and the remaining methylamine moiety is then transferred to the lipoamide cofactor of the H protein. The protein is Probable glycine dehydrogenase (decarboxylating) subunit 1 of Chlorobium chlorochromatii (strain CaD3).